A 401-amino-acid polypeptide reads, in one-letter code: Carbamoyl phosphate synthase small chain (401 aa).

The interval 1 to 203 is CPSase; that stretch reads MTETAPWTTR…KGYGTLGEAD (203 aa). L-glutamine contacts are provided by Ser-56, Gly-255, and Gly-257. The 189-residue stretch at 207 to 395 folds into the Glutamine amidotransferase type-1 domain; sequence HVVCVDFGVK…VNLLRENKGE (189 aa). Residue Cys-284 is the Nucleophile of the active site. Leu-285, Gln-288, Asn-326, Gly-328, and Phe-329 together coordinate L-glutamine. Residues His-368 and Glu-370 contribute to the active site.

It belongs to the CarA family. In terms of assembly, composed of two chains; the small (or glutamine) chain promotes the hydrolysis of glutamine to ammonia, which is used by the large (or ammonia) chain to synthesize carbamoyl phosphate. Tetramer of heterodimers (alpha,beta)4.

It catalyses the reaction hydrogencarbonate + L-glutamine + 2 ATP + H2O = carbamoyl phosphate + L-glutamate + 2 ADP + phosphate + 2 H(+). The enzyme catalyses L-glutamine + H2O = L-glutamate + NH4(+). It participates in amino-acid biosynthesis; L-arginine biosynthesis; carbamoyl phosphate from bicarbonate: step 1/1. Its pathway is pyrimidine metabolism; UMP biosynthesis via de novo pathway; (S)-dihydroorotate from bicarbonate: step 1/3. Small subunit of the glutamine-dependent carbamoyl phosphate synthetase (CPSase). CPSase catalyzes the formation of carbamoyl phosphate from the ammonia moiety of glutamine, carbonate, and phosphate donated by ATP, constituting the first step of 2 biosynthetic pathways, one leading to arginine and/or urea and the other to pyrimidine nucleotides. The small subunit (glutamine amidotransferase) binds and cleaves glutamine to supply the large subunit with the substrate ammonia. The chain is Carbamoyl phosphate synthase small chain from Agrobacterium fabrum (strain C58 / ATCC 33970) (Agrobacterium tumefaciens (strain C58)).